Reading from the N-terminus, the 223-residue chain is Golgi SNAP receptor complex member 1-1 (223 aa).

Residues 1 to 201 are Cytoplasmic-facing; the sequence is MDVPSSWDAL…AAIKRKKSMD (201 aa). A coiled-coil region spans residues 8–67; it reads DALRKQARKIEAQLDEQMHSYRRLVSTKALSKSDGNESDLEAGIDLLLRQLQQVNAQMQA. A helical; Anchor for type IV membrane protein transmembrane segment spans residues 202–222; that stretch reads TIILSLVAAVCTFLIFIYWIT. A topological domain (vesicular) is located at residue K223.

It belongs to the GOSR1 family. Component of several multiprotein Golgi SNARE complexes.

Its subcellular location is the golgi apparatus membrane. Functionally, involved in transport from the ER to the Golgi apparatus as well as in intra-Golgi transport. It belongs to a super-family of proteins called t-SNAREs or soluble NSF (N-ethylmaleimide-sensitive factor) attachment protein receptor. The chain is Golgi SNAP receptor complex member 1-1 (GOS11) from Arabidopsis thaliana (Mouse-ear cress).